Reading from the N-terminus, the 282-residue chain is Bis(5'-nucleosyl)-tetraphosphatase, symmetrical (282 aa).

The protein belongs to the Ap4A hydrolase family.

The catalysed reaction is P(1),P(4)-bis(5'-adenosyl) tetraphosphate + H2O = 2 ADP + 2 H(+). In terms of biological role, hydrolyzes diadenosine 5',5'''-P1,P4-tetraphosphate to yield ADP. The polypeptide is Bis(5'-nucleosyl)-tetraphosphatase, symmetrical (Burkholderia mallei (strain NCTC 10247)).